The primary structure comprises 248 residues: ATP synthase subunit a (248 aa).

The next 5 membrane-spanning stretches (helical) occupy residues 31 to 51 (GQVL…VLLG), 90 to 110 (VPYV…GNLF), 129 to 149 (INTT…AGIS), 195 to 215 (VIAV…MILF), and 216 to 236 (LFTG…YIGE).

It belongs to the ATPase A chain family. As to quaternary structure, F-type ATPases have 2 components, CF(1) - the catalytic core - and CF(0) - the membrane proton channel. CF(1) has five subunits: alpha(3), beta(3), gamma(1), delta(1), epsilon(1). CF(0) has four main subunits: a, b, b' and c.

The protein localises to the cellular thylakoid membrane. Its function is as follows. Key component of the proton channel; it plays a direct role in the translocation of protons across the membrane. This chain is ATP synthase subunit a, found in Synechococcus sp. (strain JA-3-3Ab) (Cyanobacteria bacterium Yellowstone A-Prime).